The chain runs to 179 residues: Stress response regulator gls24 homolog (179 aa).

A disordered region spans residues 147–179; sequence TSEFTSHQVENVKASVDNGVEKLQDQKAEPRVK. Basic and acidic residues predominate over residues 165–179; that stretch reads GVEKLQDQKAEPRVK.

Belongs to the asp23 family.

This Streptococcus pyogenes serotype M28 (strain MGAS6180) protein is Stress response regulator gls24 homolog.